Reading from the N-terminus, the 1581-residue chain is Pentafunctional AROM polypeptide (1581 aa).

Positions 1-384 (MPEPTKISIL…YEPKASVVPN (384 aa)) are 3-dehydroquinate synthase. Residues 44 to 46 (DTN), 81 to 84 (EVSK), 114 to 116 (GGV), and D119 each bind NAD(+). R130 contacts 7-phospho-2-dehydro-3-deoxy-D-arabino-heptonate. Residue 139–140 (TT) participates in NAD(+) binding. 7-phospho-2-dehydro-3-deoxy-D-arabino-heptonate contacts are provided by D146 and K152. K161 serves as a coordination point for NAD(+). Residue N162 coordinates 7-phospho-2-dehydro-3-deoxy-D-arabino-heptonate. NAD(+) is bound by residues 179–182 (FLET) and N190. Zn(2+) is bound at residue E194. 7-phospho-2-dehydro-3-deoxy-D-arabino-heptonate contacts are provided by residues 194-197 (EVIK) and K250. The active-site Proton acceptor; for 3-dehydroquinate synthase activity is E260. Residues 264–268 (RNLLN) and H271 contribute to the 7-phospho-2-dehydro-3-deoxy-D-arabino-heptonate site. H271 is a binding site for Zn(2+). The active-site Proton acceptor; for 3-dehydroquinate synthase activity is H275. Positions 287 and 356 each coordinate 7-phospho-2-dehydro-3-deoxy-D-arabino-heptonate. H287 lines the Zn(2+) pocket. The tract at residues 397–842 (VHPGVPKESN…WDTLRQLFSV (446 aa)) is EPSP synthase. C824 functions as the For EPSP synthase activity in the catalytic mechanism. Positions 864 to 1056 (SASVFIIGMR…KQKKHSFFVS (193 aa)) are shikimate kinase. 871 to 878 (GMRGAGKT) serves as a coordination point for ATP. The segment at 1057–1277 (LTLPDLRSAS…AAPGQLSATE (221 aa)) is 3-dehydroquinase. H1180 serves as the catalytic Proton acceptor; for 3-dehydroquinate dehydratase activity. K1208 serves as the catalytic Schiff-base intermediate with substrate; for 3-dehydroquinate dehydratase activity. The interval 1290 to 1581 (KKRFAIFGNP…ARTAVLGDSA (292 aa)) is shikimate dehydrogenase.

In the N-terminal section; belongs to the sugar phosphate cyclases superfamily. Dehydroquinate synthase family. This sequence in the 2nd section; belongs to the EPSP synthase family. The protein in the 3rd section; belongs to the shikimate kinase family. It in the 4th section; belongs to the type-I 3-dehydroquinase family. In the C-terminal section; belongs to the shikimate dehydrogenase family. Homodimer. It depends on Zn(2+) as a cofactor.

The protein localises to the cytoplasm. The catalysed reaction is 7-phospho-2-dehydro-3-deoxy-D-arabino-heptonate = 3-dehydroquinate + phosphate. It catalyses the reaction 3-dehydroquinate = 3-dehydroshikimate + H2O. It carries out the reaction shikimate + NADP(+) = 3-dehydroshikimate + NADPH + H(+). The enzyme catalyses shikimate + ATP = 3-phosphoshikimate + ADP + H(+). The catalysed reaction is 3-phosphoshikimate + phosphoenolpyruvate = 5-O-(1-carboxyvinyl)-3-phosphoshikimate + phosphate. Its pathway is metabolic intermediate biosynthesis; chorismate biosynthesis; chorismate from D-erythrose 4-phosphate and phosphoenolpyruvate: step 2/7. It participates in metabolic intermediate biosynthesis; chorismate biosynthesis; chorismate from D-erythrose 4-phosphate and phosphoenolpyruvate: step 3/7. The protein operates within metabolic intermediate biosynthesis; chorismate biosynthesis; chorismate from D-erythrose 4-phosphate and phosphoenolpyruvate: step 4/7. It functions in the pathway metabolic intermediate biosynthesis; chorismate biosynthesis; chorismate from D-erythrose 4-phosphate and phosphoenolpyruvate: step 5/7. Its pathway is metabolic intermediate biosynthesis; chorismate biosynthesis; chorismate from D-erythrose 4-phosphate and phosphoenolpyruvate: step 6/7. The AROM polypeptide catalyzes 5 consecutive enzymatic reactions in prechorismate polyaromatic amino acid biosynthesis. The chain is Pentafunctional AROM polypeptide from Aspergillus terreus (strain NIH 2624 / FGSC A1156).